Here is a 486-residue protein sequence, read N- to C-terminus: Galactose-1-phosphate uridylyltransferase (486 aa).

Belongs to the galactose-1-phosphate uridylyltransferase type 2 family.

Its subcellular location is the cytoplasm. It catalyses the reaction alpha-D-galactose 1-phosphate + UDP-alpha-D-glucose = alpha-D-glucose 1-phosphate + UDP-alpha-D-galactose. The protein operates within carbohydrate metabolism; galactose metabolism. The chain is Galactose-1-phosphate uridylyltransferase from Lacticaseibacillus casei (Lactobacillus casei).